The primary structure comprises 258 residues: Thiazole synthase (258 aa).

Lys-98 serves as the catalytic Schiff-base intermediate with DXP. 1-deoxy-D-xylulose 5-phosphate contacts are provided by residues Gly-159, 185–186, and 207–208; these read AG and NT.

It belongs to the ThiG family. As to quaternary structure, homotetramer. Forms heterodimers with either ThiH or ThiS.

The protein localises to the cytoplasm. The enzyme catalyses [ThiS sulfur-carrier protein]-C-terminal-Gly-aminoethanethioate + 2-iminoacetate + 1-deoxy-D-xylulose 5-phosphate = [ThiS sulfur-carrier protein]-C-terminal Gly-Gly + 2-[(2R,5Z)-2-carboxy-4-methylthiazol-5(2H)-ylidene]ethyl phosphate + 2 H2O + H(+). It functions in the pathway cofactor biosynthesis; thiamine diphosphate biosynthesis. Functionally, catalyzes the rearrangement of 1-deoxy-D-xylulose 5-phosphate (DXP) to produce the thiazole phosphate moiety of thiamine. Sulfur is provided by the thiocarboxylate moiety of the carrier protein ThiS. In vitro, sulfur can be provided by H(2)S. The polypeptide is Thiazole synthase (Bacillus cereus (strain ZK / E33L)).